The chain runs to 336 residues: Aspartate--ammonia ligase (336 aa).

This sequence belongs to the class-II aminoacyl-tRNA synthetase family. AsnA subfamily.

The protein resides in the cytoplasm. The enzyme catalyses L-aspartate + NH4(+) + ATP = L-asparagine + AMP + diphosphate + H(+). Its pathway is amino-acid biosynthesis; L-asparagine biosynthesis; L-asparagine from L-aspartate (ammonia route): step 1/1. This is Aspartate--ammonia ligase from Ruminiclostridium cellulolyticum (strain ATCC 35319 / DSM 5812 / JCM 6584 / H10) (Clostridium cellulolyticum).